A 113-amino-acid chain; its full sequence is Probable mesentericin-Y105 immunity protein (113 aa).

It belongs to the immunity protein EntA family.

Its function is as follows. Imparts immunity to mesentericin-Y105 to naturally sensitive host strains. The polypeptide is Probable mesentericin-Y105 immunity protein (mesI) (Leuconostoc mesenteroides).